Here is a 279-residue protein sequence, read N- to C-terminus: Acetylglutamate kinase (279 aa).

Residues 64–65 (GG), R86, and N177 contribute to the substrate site.

This sequence belongs to the acetylglutamate kinase family. ArgB subfamily.

The protein localises to the cytoplasm. The catalysed reaction is N-acetyl-L-glutamate + ATP = N-acetyl-L-glutamyl 5-phosphate + ADP. It functions in the pathway amino-acid biosynthesis; L-arginine biosynthesis; N(2)-acetyl-L-ornithine from L-glutamate: step 2/4. Catalyzes the ATP-dependent phosphorylation of N-acetyl-L-glutamate. This is Acetylglutamate kinase from Campylobacter jejuni subsp. jejuni serotype O:6 (strain 81116 / NCTC 11828).